The primary structure comprises 203 residues: N-(5'-phosphoribosyl)anthranilate isomerase (203 aa).

This sequence belongs to the TrpF family.

The enzyme catalyses N-(5-phospho-beta-D-ribosyl)anthranilate = 1-(2-carboxyphenylamino)-1-deoxy-D-ribulose 5-phosphate. It functions in the pathway amino-acid biosynthesis; L-tryptophan biosynthesis; L-tryptophan from chorismate: step 3/5. The protein is N-(5'-phosphoribosyl)anthranilate isomerase of Thermoanaerobacter pseudethanolicus (strain ATCC 33223 / 39E) (Clostridium thermohydrosulfuricum).